The chain runs to 204 residues: Ribonuclease HII (204 aa).

One can recognise an RNase H type-2 domain in the interval 16–204; it reads ESIAGCDEVG…RRSFLKKILK (189 aa). Positions 22, 23, and 120 each coordinate a divalent metal cation.

This sequence belongs to the RNase HII family. It depends on Mn(2+) as a cofactor. Requires Mg(2+) as cofactor.

The protein localises to the cytoplasm. The catalysed reaction is Endonucleolytic cleavage to 5'-phosphomonoester.. Functionally, endonuclease that specifically degrades the RNA of RNA-DNA hybrids. This chain is Ribonuclease HII, found in Alkaliphilus metalliredigens (strain QYMF).